Consider the following 473-residue polypeptide: MDYLPIFMKIEQQHCLIVGGGTVAARKADLFIKSGAIVTVVAPKLGNEMTFHLAQGKIIWHMNTFSTALVSELPRPSLVISATDDQNVNLAVYKTYHAQDIPVNVADQTEYCDFILPAIVDRSPMTIAISTGGRSPVLARVMKARLETMIPHGFSVLTDLVGRYRQTVKNVISDIDGRKTFWETLLSGLFIDKAVHGNTGEAEALLEAELETIKNNGQSLPQGEVYIIGAGPGDPDLMTFKGLRLLQQADVILYDRLVAPEILEMGRREAERIYVGKKEKWHKMDQKDINQMLVDLARQGKRVARLKGGDPYIFGRGAEEVELLVQHDVPYQVVPGITAAAGCSVYADFPLTHRDYAQSVALITGHQQAGAQGIDYARLAQSGDTMVFYMGIKNAPKIQAGLIAHGLCPDTPAAIIENGTRLNQKVTVTSLAKLSETIQKKSIKPPALLVIGEVIKVRERLQKKSLLDDRVPA.

A precorrin-2 dehydrogenase /sirohydrochlorin ferrochelatase region spans residues 1–206; the sequence is MDYLPIFMKI…GNTGEAEALL (206 aa). Residues 22–23 and 43–44 each bind NAD(+); these read TV and PK. The segment at 223–473 is uroporphyrinogen-III C-methyltransferase; sequence GEVYIIGAGP…KSLLDDRVPA (251 aa). Residue proline 232 coordinates S-adenosyl-L-methionine. Residue aspartate 255 is the Proton acceptor of the active site. Lysine 277 serves as the catalytic Proton donor. Residues 308–310, isoleucine 313, 338–339, methionine 390, and glycine 419 contribute to the S-adenosyl-L-methionine site; these read GGD and TA.

This sequence in the N-terminal section; belongs to the precorrin-2 dehydrogenase / sirohydrochlorin ferrochelatase family. The protein in the C-terminal section; belongs to the precorrin methyltransferase family.

It catalyses the reaction uroporphyrinogen III + 2 S-adenosyl-L-methionine = precorrin-2 + 2 S-adenosyl-L-homocysteine + H(+). It carries out the reaction precorrin-2 + NAD(+) = sirohydrochlorin + NADH + 2 H(+). The catalysed reaction is siroheme + 2 H(+) = sirohydrochlorin + Fe(2+). It participates in cofactor biosynthesis; adenosylcobalamin biosynthesis; precorrin-2 from uroporphyrinogen III: step 1/1. Its pathway is cofactor biosynthesis; adenosylcobalamin biosynthesis; sirohydrochlorin from precorrin-2: step 1/1. It functions in the pathway porphyrin-containing compound metabolism; siroheme biosynthesis; precorrin-2 from uroporphyrinogen III: step 1/1. The protein operates within porphyrin-containing compound metabolism; siroheme biosynthesis; siroheme from sirohydrochlorin: step 1/1. It participates in porphyrin-containing compound metabolism; siroheme biosynthesis; sirohydrochlorin from precorrin-2: step 1/1. Multifunctional enzyme that catalyzes the SAM-dependent methylations of uroporphyrinogen III at position C-2 and C-7 to form precorrin-2 via precorrin-1. Then it catalyzes the NAD-dependent ring dehydrogenation of precorrin-2 to yield sirohydrochlorin. Finally, it catalyzes the ferrochelation of sirohydrochlorin to yield siroheme. The polypeptide is Siroheme synthase (Hydrogenovibrio crunogenus (strain DSM 25203 / XCL-2) (Thiomicrospira crunogena)).